A 1325-amino-acid polypeptide reads, in one-letter code: Zinc finger MYM-type protein 6 (1325 aa).

8 consecutive MYM-type zinc fingers follow at residues 113–151, 163–206, 213–248, 296–334, 342–443, 451–485, 492–531, and 538–572; these read QLFC…PKDV, KDFC…RFEV, HGLC…SSGP, ELFC…QYHL, YSFC…KPEL, FLFC…KETV, KPFC…LVEN, and EEFC…SESI. Ser-397 is modified (phosphoserine). Residues 665 to 733 are disordered; sequence ESTQEDAMKF…NDAELDSPPS (69 aa). The segment covering 695 to 706 has biased composition (polar residues); it reads PVTQTKATSCKP.

Expressed at high levels in heart, skeletal muscle, kidney and liver.

It localises to the nucleus. In terms of biological role, plays a role in the regulation of cell morphology and cytoskeletal organization. This is Zinc finger MYM-type protein 6 (ZMYM6) from Homo sapiens (Human).